Here is a 1284-residue protein sequence, read N- to C-terminus: Kinesin-like protein KIN-4C (1284 aa).

In terms of domain architecture, Kinesin motor spans 12 to 364 (SVKVVVNIRP…LKYANRARNI (353 aa)). 91–98 (GQTGSGKT) serves as a coordination point for ATP. Coiled-coil stretches lie at residues 407-445 (SAALEELQLLQQKVSLLELKNSELNHELKERELSYEQLA), 561-711 (RDHS…QFRS), and 911-950 (MCKEKEHLICDLKEKVVALNGRIRQLETQVKDLNNQNMLL). Disordered regions lie at residues 1040–1070 (RRQTVSSHLNPNPGSGTTQKSAKSEMASQEK) and 1158–1284 (MSEK…NHLR). Residues 1043–1070 (TVSSHLNPNPGSGTTQKSAKSEMASQEK) show a composition bias toward polar residues. Composition is skewed to basic and acidic residues over residues 1158 to 1172 (MSEKEAQETKSRKPL) and 1275 to 1284 (NANEKENHLR).

The protein belongs to the TRAFAC class myosin-kinesin ATPase superfamily. Kinesin family. KIN-4 subfamily. As to quaternary structure, homodimer.

Its function is as follows. Microtubule-dependent motor protein involved in the control of the oriented deposition of cellulose microfibrils. The chain is Kinesin-like protein KIN-4C from Oryza sativa subsp. japonica (Rice).